A 512-amino-acid chain; its full sequence is 23S rRNA (uracil(1939)-C(5))-methyltransferase RlmD (512 aa).

A compositionally biased stretch (low complexity) spans 1-14; sequence MQPTDSKTSTSDTT. The disordered stretch occupies residues 1–45; sequence MQPTDSKTSTSDTTEQPNETQTITIPPSKKKSKPSSKTRRRLKDA. Residues 15 to 25 show a composition bias toward polar residues; the sequence is EQPNETQTITI. Positions 28–42 are enriched in basic residues; it reads SKKKSKPSSKTRRRL. A TRAM domain is found at 41-113; the sequence is RLKDAEPLPF…TSFEEGDAVN (73 aa). Cys-127, Cys-133, Cys-136, and Cys-215 together coordinate [4Fe-4S] cluster. Gln-340, Phe-369, Asn-374, Glu-393, Asp-420, and Asp-441 together coordinate S-adenosyl-L-methionine. Cys-467 functions as the Nucleophile in the catalytic mechanism.

It belongs to the class I-like SAM-binding methyltransferase superfamily. RNA M5U methyltransferase family. RlmD subfamily.

The enzyme catalyses uridine(1939) in 23S rRNA + S-adenosyl-L-methionine = 5-methyluridine(1939) in 23S rRNA + S-adenosyl-L-homocysteine + H(+). Its function is as follows. Catalyzes the formation of 5-methyl-uridine at position 1939 (m5U1939) in 23S rRNA. In Psychrobacter arcticus (strain DSM 17307 / VKM B-2377 / 273-4), this protein is 23S rRNA (uracil(1939)-C(5))-methyltransferase RlmD.